A 475-amino-acid polypeptide reads, in one-letter code: Ribulose bisphosphate carboxylase large chain (475 aa).

The propeptide occupies 1–2 (MV). Proline 3 bears the N-acetylproline mark. Lysine 14 is subject to N6,N6,N6-trimethyllysine. Residues asparagine 123 and threonine 173 each contribute to the substrate site. The Proton acceptor role is filled by lysine 175. Lysine 177 lines the substrate pocket. Mg(2+) is bound by residues lysine 201, aspartate 203, and glutamate 204. Position 201 is an N6-carboxylysine (lysine 201). The active-site Proton acceptor is the histidine 294. Substrate-binding residues include arginine 295, histidine 327, and serine 379.

This sequence belongs to the RuBisCO large chain family. Type I subfamily. Heterohexadecamer of 8 large chains and 8 small chains. Mg(2+) is required as a cofactor.

The protein resides in the plastid. It localises to the chloroplast. It carries out the reaction 2 (2R)-3-phosphoglycerate + 2 H(+) = D-ribulose 1,5-bisphosphate + CO2 + H2O. The catalysed reaction is D-ribulose 1,5-bisphosphate + O2 = 2-phosphoglycolate + (2R)-3-phosphoglycerate + 2 H(+). Functionally, ruBisCO catalyzes two reactions: the carboxylation of D-ribulose 1,5-bisphosphate, the primary event in carbon dioxide fixation, as well as the oxidative fragmentation of the pentose substrate in the photorespiration process. Both reactions occur simultaneously and in competition at the same active site. This chain is Ribulose bisphosphate carboxylase large chain, found in Dunaliella tertiolecta (Green alga).